The sequence spans 470 residues: Siroheme synthase (470 aa).

The interval 1-203 (MEFFPIFLKL…GDEAAARAEM (203 aa)) is precorrin-2 dehydrogenase /sirohydrochlorin ferrochelatase. Residues 22-23 (EV) and 43-44 (PE) each bind NAD(+). Serine 128 is modified (phosphoserine). Positions 216 to 470 (GAVYLVGAGP…ENSAVTIQED (255 aa)) are uroporphyrinogen-III C-methyltransferase. Proline 225 is an S-adenosyl-L-methionine binding site. Aspartate 248 functions as the Proton acceptor in the catalytic mechanism. Lysine 270 functions as the Proton donor in the catalytic mechanism. Residues 301-303 (GGD), methionine 383, and alanine 412 contribute to the S-adenosyl-L-methionine site.

The protein in the N-terminal section; belongs to the precorrin-2 dehydrogenase / sirohydrochlorin ferrochelatase family. This sequence in the C-terminal section; belongs to the precorrin methyltransferase family.

It carries out the reaction uroporphyrinogen III + 2 S-adenosyl-L-methionine = precorrin-2 + 2 S-adenosyl-L-homocysteine + H(+). The enzyme catalyses precorrin-2 + NAD(+) = sirohydrochlorin + NADH + 2 H(+). The catalysed reaction is siroheme + 2 H(+) = sirohydrochlorin + Fe(2+). Its pathway is cofactor biosynthesis; adenosylcobalamin biosynthesis; precorrin-2 from uroporphyrinogen III: step 1/1. It functions in the pathway cofactor biosynthesis; adenosylcobalamin biosynthesis; sirohydrochlorin from precorrin-2: step 1/1. The protein operates within porphyrin-containing compound metabolism; siroheme biosynthesis; precorrin-2 from uroporphyrinogen III: step 1/1. It participates in porphyrin-containing compound metabolism; siroheme biosynthesis; siroheme from sirohydrochlorin: step 1/1. Its pathway is porphyrin-containing compound metabolism; siroheme biosynthesis; sirohydrochlorin from precorrin-2: step 1/1. In terms of biological role, multifunctional enzyme that catalyzes the SAM-dependent methylations of uroporphyrinogen III at position C-2 and C-7 to form precorrin-2 via precorrin-1. Then it catalyzes the NAD-dependent ring dehydrogenation of precorrin-2 to yield sirohydrochlorin. Finally, it catalyzes the ferrochelation of sirohydrochlorin to yield siroheme. The protein is Siroheme synthase of Chromobacterium violaceum (strain ATCC 12472 / DSM 30191 / JCM 1249 / CCUG 213 / NBRC 12614 / NCIMB 9131 / NCTC 9757 / MK).